Here is a 429-residue protein sequence, read N- to C-terminus: Small ribosomal subunit protein mS47 (429 aa).

Positions 141, 166, 189, and 197 each coordinate substrate.

It belongs to the enoyl-CoA hydratase/isomerase family. Mitochondrion-specific ribosomal protein mS47 subfamily. As to quaternary structure, component of the mitochondrial small ribosomal subunit (mt-SSU). Mature yeast 74S mitochondrial ribosomes consist of a small (37S) and a large (54S) subunit. The 37S small subunit contains a 15S ribosomal RNA (15S mt-rRNA) and at least 32 different proteins. The 54S large subunit contains a 21S rRNA (21S mt-rRNA) and at least 45 different proteins. mS47/snr1 forms a protuberance of the yeast mitoribosome and retains a solvent-exposed cavity likely capable of accommodating a substrate, in accordance with it being an active enzyme as well as an integral constituent of the mitoribosome.

It is found in the mitochondrion. It carries out the reaction 3-hydroxy-2-methylpropanoyl-CoA + H2O = 3-hydroxy-2-methylpropanoate + CoA + H(+). The protein operates within amino-acid degradation; L-valine degradation. Functionally, component of the mitochondrial ribosome (mitoribosome), a dedicated translation machinery responsible for the synthesis of mitochondrial genome-encoded proteins, including at least some of the essential transmembrane subunits of the mitochondrial respiratory chain. The mitoribosomes are attached to the mitochondrial inner membrane and translation products are cotranslationally integrated into the membrane. mS47/snr1 has enzymatic activity in vitro, and is able to catalyze the specific hydrolysis of 3-hydroxyisobutyryl-CoA (HIBYL-CoA). However, because the turnover rate of mS47/snr1 is only a fraction of that of the homologous mammalian enzyme, the physiological function of this activity remains unclear. Has an indirect role in endocytic membrane trafficking. This chain is Small ribosomal subunit protein mS47 (snr1), found in Schizosaccharomyces pombe (strain 972 / ATCC 24843) (Fission yeast).